Here is a 432-residue protein sequence, read N- to C-terminus: Phosphomethylpyrimidine synthase (432 aa).

Substrate contacts are provided by residues asparagine 66, methionine 95, tyrosine 124, histidine 163, 185 to 187 (SRG), 226 to 229 (DGLR), and glutamate 265. A Zn(2+)-binding site is contributed by histidine 269. Substrate is bound at residue tyrosine 292. Histidine 333 lines the Zn(2+) pocket. [4Fe-4S] cluster-binding residues include cysteine 409, cysteine 412, and cysteine 416.

The protein belongs to the ThiC family. The cofactor is [4Fe-4S] cluster.

It carries out the reaction 5-amino-1-(5-phospho-beta-D-ribosyl)imidazole + S-adenosyl-L-methionine = 4-amino-2-methyl-5-(phosphooxymethyl)pyrimidine + CO + 5'-deoxyadenosine + formate + L-methionine + 3 H(+). Its pathway is cofactor biosynthesis; thiamine diphosphate biosynthesis. Catalyzes the synthesis of the hydroxymethylpyrimidine phosphate (HMP-P) moiety of thiamine from aminoimidazole ribotide (AIR) in a radical S-adenosyl-L-methionine (SAM)-dependent reaction. The protein is Phosphomethylpyrimidine synthase of Thermoanaerobacter sp. (strain X514).